The following is a 360-amino-acid chain: NAD(P)H-quinone oxidoreductase subunit 1, chloroplastic (360 aa).

8 helical membrane-spanning segments follow: residues 29–49, 96–116, 128–148, 166–186, 204–224, 255–277, 297–317, and 333–353; these read WIPL…LVIV, IWLF…AYLV, ISLG…GLLM, AAQA…ICLL, ILGW…IAAL, GLFY…ILYL, IFAA…FIFL, and LLDL…LLTA.

Belongs to the complex I subunit 1 family. As to quaternary structure, NDH is composed of at least 16 different subunits, 5 of which are encoded in the nucleus.

The protein localises to the plastid. It localises to the chloroplast thylakoid membrane. It catalyses the reaction a plastoquinone + NADH + (n+1) H(+)(in) = a plastoquinol + NAD(+) + n H(+)(out). The catalysed reaction is a plastoquinone + NADPH + (n+1) H(+)(in) = a plastoquinol + NADP(+) + n H(+)(out). Functionally, NDH shuttles electrons from NAD(P)H:plastoquinone, via FMN and iron-sulfur (Fe-S) centers, to quinones in the photosynthetic chain and possibly in a chloroplast respiratory chain. The immediate electron acceptor for the enzyme in this species is believed to be plastoquinone. Couples the redox reaction to proton translocation, and thus conserves the redox energy in a proton gradient. This chain is NAD(P)H-quinone oxidoreductase subunit 1, chloroplastic, found in Chlorokybus atmophyticus (Soil alga).